Consider the following 431-residue polypeptide: Histidinol dehydrogenase (431 aa).

The NAD(+) site is built by Tyr-127, Gln-185, and Asn-208. 3 residues coordinate substrate: Ser-234, Gln-256, and His-259. The Zn(2+) site is built by Gln-256 and His-259. Catalysis depends on proton acceptor residues Glu-323 and His-324. The substrate site is built by His-324, Asp-357, Glu-411, and His-416. Asp-357 contacts Zn(2+). Position 416 (His-416) interacts with Zn(2+).

Belongs to the histidinol dehydrogenase family. Zn(2+) serves as cofactor.

It carries out the reaction L-histidinol + 2 NAD(+) + H2O = L-histidine + 2 NADH + 3 H(+). It participates in amino-acid biosynthesis; L-histidine biosynthesis; L-histidine from 5-phospho-alpha-D-ribose 1-diphosphate: step 9/9. Functionally, catalyzes the sequential NAD-dependent oxidations of L-histidinol to L-histidinaldehyde and then to L-histidine. The protein is Histidinol dehydrogenase of Vibrio cholerae serotype O1 (strain ATCC 39315 / El Tor Inaba N16961).